The following is a 275-amino-acid chain: Large ribosomal subunit protein uL2 (275 aa).

The disordered stretch occupies residues 208–275 (AGAKRWRGRR…NMIIRDRRKK (68 aa)). 2 stretches are compositionally biased toward basic residues: residues 209 to 219 (GAKRWRGRRPT) and 254 to 263 (KGYKTRRNKR).

It belongs to the universal ribosomal protein uL2 family. Part of the 50S ribosomal subunit. Forms a bridge to the 30S subunit in the 70S ribosome.

In terms of biological role, one of the primary rRNA binding proteins. Required for association of the 30S and 50S subunits to form the 70S ribosome, for tRNA binding and peptide bond formation. It has been suggested to have peptidyltransferase activity; this is somewhat controversial. Makes several contacts with the 16S rRNA in the 70S ribosome. The protein is Large ribosomal subunit protein uL2 of Coxiella burnetii (strain CbuG_Q212) (Coxiella burnetii (strain Q212)).